A 1196-amino-acid chain; its full sequence is Phosphatidylinositol-3,5-bisphosphate 3-phosphatase MTMR3 (1196 aa).

Phosphoserine is present on S8. Residues 155–576 (EHVTSRFKNE…RNLMLWSAVY (422 aa)) enclose the Myotubularin phosphatase domain. 3 residues coordinate a 1,2-diacyl-sn-glycero-3-phospho-(1D-myo-inositol-3,5-bisphosphate): N326, N351, and I352. A 1,2-diacyl-sn-glycero-3-phospho-(1D-myo-inositol-3-phosphate)-binding residues include N326, N351, and I352. C413 serves as the catalytic Phosphocysteine intermediate. A 1,2-diacyl-sn-glycero-3-phospho-(1D-myo-inositol-3,5-bisphosphate)-binding residues include S414, D415, G416, W417, D418, R419, K455, and R459. A 1,2-diacyl-sn-glycero-3-phospho-(1D-myo-inositol-3-phosphate)-binding residues include S414, D415, G416, W417, D418, and R419. An a 1,2-diacyl-sn-glycero-3-phospho-(1D-myo-inositol-3-phosphate)-binding site is contributed by R459. The tract at residues 587–612 (DDSCAPYPVPGTSPDEPPLSRLPKTR) is disordered. The span at 593-603 (YPVPGTSPDEP) shows a compositional bias: pro residues. A phosphoserine mark is found at S613, S633, S647, and S651. Disordered stretches follow at residues 697–719 (TKEESGVEEPTHRGHTEVPEVKE) and 855–900 (ESGP…HRTS). Residue S907 is modified to Phosphoserine. Residues 993–1008 (NSHSGRPSTTSSPDQP) show a composition bias toward polar residues. The tract at residues 993-1019 (NSHSGRPSTTSSPDQPSRSHLDDDGMP) is disordered. Residues 1027–1060 (QRLRQIESGHQQEVETLKKQVQELKSRLESQYLT) adopt a coiled-coil conformation. S1062 is subject to Phosphoserine. The FYVE-type zinc finger occupies 1117-1177 (DHLAAHCYAC…VCKSCYSSLH (61 aa)). Zn(2+) is bound by residues C1123, C1126, C1139, C1142, C1147, C1150, C1169, and C1172.

It belongs to the protein-tyrosine phosphatase family. Non-receptor class myotubularin subfamily. As to quaternary structure, forms heterodimers with MTMR4 that recruit both CEP55 and PLK1; occurs during early mitosis, regulates the phosphorylation of CEP55 by PLK1 and its recruitment to the midbody where it mediates cell abscission.

The protein resides in the cytoplasm. It is found in the cytosol. It localises to the membrane. It catalyses the reaction a 1,2-diacyl-sn-glycero-3-phospho-(1D-myo-inositol-3,5-bisphosphate) + H2O = a 1,2-diacyl-sn-glycero-3-phospho-(1D-myo-inositol-5-phosphate) + phosphate. The enzyme catalyses a 1,2-diacyl-sn-glycero-3-phospho-(1D-myo-inositol-3-phosphate) + H2O = a 1,2-diacyl-sn-glycero-3-phospho-(1D-myo-inositol) + phosphate. It carries out the reaction 1,2-dihexadecanoyl-sn-glycero-3-phospho-(1D-myo-inositol-3-phosphate) + H2O = 1,2-dihexadecanoyl-sn-glycero-3-phospho-(1D-myo-inositol) + phosphate. The catalysed reaction is 1,2-dioctanoyl-sn-glycero-3-phospho-(1-D-myo-inositol-3-phosphate) + H2O = 1,2-dioctanoyl-sn-glycero-3-phospho-(1D-myo-inositol) + phosphate. It catalyses the reaction 1,2-dihexadecanoyl-sn-glycero-3-phospho-(1D-myo-inositol-3,5-phosphate) + H2O = 1,2-dihexadecanoyl-sn-glycero-3-phospho-(1D-myo-inositol-5-phosphate) + phosphate. Functionally, lipid phosphatase that specifically dephosphorylates the D-3 position of phosphatidylinositol 3-phosphate and phosphatidylinositol 3,5-bisphosphate, generating phosphatidylinositol and phosphatidylinositol 5-phosphate. Decreases the levels of phosphatidylinositol 3-phosphate, a phospholipid found in cell membranes where it acts as key regulator of both cell signaling and intracellular membrane traffic. Could also have a molecular sequestering/adapter activity and regulate biological processes independently of its phosphatase activity. It includes the regulation of midbody abscission during mitotic cytokinesis. The polypeptide is Phosphatidylinositol-3,5-bisphosphate 3-phosphatase MTMR3 (Mus musculus (Mouse)).